Here is a 71-residue protein sequence, read N- to C-terminus: DNA gyrase inhibitor YacG (71 aa).

Residues Cys-9, Cys-12, Cys-28, and Cys-32 each coordinate Zn(2+). The segment at 43–71 is disordered; sequence EEKRIPSQSESNDSDEWSEMPEQDPKPFN. The segment covering 54–64 has biased composition (acidic residues); it reads NDSDEWSEMPE.

This sequence belongs to the DNA gyrase inhibitor YacG family. Interacts with GyrB. The cofactor is Zn(2+).

In terms of biological role, inhibits all the catalytic activities of DNA gyrase by preventing its interaction with DNA. Acts by binding directly to the C-terminal domain of GyrB, which probably disrupts DNA binding by the gyrase. The polypeptide is DNA gyrase inhibitor YacG (Proteus mirabilis (strain HI4320)).